The chain runs to 383 residues: 8-amino-7-oxononanoate synthase (383 aa).

Residues Arg-27 and Arg-34 each coordinate substrate. Residue 114-115 (GY) participates in pyridoxal 5'-phosphate binding. His-139 contributes to the substrate binding site. Pyridoxal 5'-phosphate-binding positions include Ser-187, 212-215 (DDAH), and 232-235 (TLSK). Lys-235 is subject to N6-(pyridoxal phosphate)lysine. Substrate is bound at residue Thr-344.

Belongs to the class-II pyridoxal-phosphate-dependent aminotransferase family. BioF subfamily. In terms of assembly, homodimer. Requires pyridoxal 5'-phosphate as cofactor.

The enzyme catalyses 6-carboxyhexanoyl-[ACP] + L-alanine + H(+) = (8S)-8-amino-7-oxononanoate + holo-[ACP] + CO2. The protein operates within cofactor biosynthesis; biotin biosynthesis. Catalyzes the decarboxylative condensation of pimeloyl-[acyl-carrier protein] and L-alanine to produce 8-amino-7-oxononanoate (AON), [acyl-carrier protein], and carbon dioxide. In Methylorubrum extorquens (strain PA1) (Methylobacterium extorquens), this protein is 8-amino-7-oxononanoate synthase.